We begin with the raw amino-acid sequence, 130 residues long: Small ribosomal subunit protein uS9 (130 aa).

This sequence belongs to the universal ribosomal protein uS9 family.

This is Small ribosomal subunit protein uS9 from Leptothrix cholodnii (strain ATCC 51168 / LMG 8142 / SP-6) (Leptothrix discophora (strain SP-6)).